The sequence spans 462 residues: Spermatogenesis- and oogenesis-specific basic helix-loop-helix-containing protein 2 (462 aa).

The 52-residue stretch at K200–V251 folds into the bHLH domain. The segment at P422–F462 is disordered. A compositionally biased stretch (polar residues) spans G442 to F462.

The protein localises to the nucleus. Probable transcription factor, which may be involved in spermatogenesis and oogenesis. This chain is Spermatogenesis- and oogenesis-specific basic helix-loop-helix-containing protein 2 (Sohlh2), found in Rattus norvegicus (Rat).